A 730-amino-acid chain; its full sequence is Nitrogen fixation protein FixI (730 aa).

Topologically, residues 1 to 101 (MHVTRDFSHY…AEVAEVAESR (101 aa)) are cytoplasmic. The HMA domain occupies 19 to 85 (KHIDLAVEGV…RLEELGYKAY (67 aa)). Positions 30 and 33 each coordinate a metal cation. Residues 102-123 (FLLRCLGVAAFATMNVMMLSIP) traverse the membrane as a helical segment. Topologically, residues 124 to 138 (VWSGNVSDMLPEQRD) are extracellular. Residues 139-162 (FFHWLSALIALPAAAYAGQPFFRS) traverse the membrane as a helical segment. Residues 163–168 (AWRALS) are Cytoplasmic-facing. A helical membrane pass occupies residues 169 to 190 (AKTTNMDVPISIGVILALGMSV). The Extracellular segment spans residues 191 to 202 (VETIHHAEHAYF). Residues 203–223 (DAAIMLLTFLLVGRFLDQNMR) form a helical membrane-spanning segment. Over 224-352 (RRTRAVAGNL…RSRYMRLADR (129 aa)) the chain is Cytoplasmic. Residues 353–375 (ASRLYAPVVHATALITILGWVIA) form a helical membrane-spanning segment. Residues 376-382 (GASWHDA) are Extracellular-facing. A helical membrane pass occupies residues 383–400 (IVTGVAVLIITCPCALGL). Residues 401–676 (AIPTVQTVAS…DSARKALHLM (276 aa)) are Cytoplasmic-facing. Residue Asp438 is the 4-aspartylphosphate intermediate of the active site. Residues Asp622 and Asp626 each coordinate Mg(2+). A helical membrane pass occupies residues 677 to 696 (RQNLWLAIGYNVLAVPVAIS). Residues 697-701 (GVVTP) are Extracellular-facing. Residues 702-720 (LIAAAAMSGSSILVMLNSL) form a helical membrane-spanning segment. Over 721-730 (RARSDSREIV) the chain is Cytoplasmic.

It belongs to the cation transport ATPase (P-type) (TC 3.A.3) family. Type IB subfamily.

The protein localises to the cell membrane. It carries out the reaction ATP + H2O = ADP + phosphate + H(+). Functionally, fixI is a pump of a specific cation involved in symbiotic nitrogen fixation. The four proteins FixG, FixH, FixI, and FixS may participate in a membrane-bound complex coupling the FixI cation pump with a redox process catalyzed by FixG. The sequence is that of Nitrogen fixation protein FixI (fixI) from Bradyrhizobium diazoefficiens (strain JCM 10833 / BCRC 13528 / IAM 13628 / NBRC 14792 / USDA 110).